The sequence spans 227 residues: Venom allergen 5 (227 aa).

An N-terminal signal peptide occupies residues 1–21; sequence MKISCLICLVIVLTIIHLSQA. 4 cysteine pairs are disulfide-bonded: cysteine 25/cysteine 37, cysteine 29/cysteine 125, cysteine 49/cysteine 117, and cysteine 193/cysteine 210. An SCP domain is found at 69-212; it reads EEHNRFRQKV…MQIHYLICNY (144 aa).

Belongs to the CRISP family. Venom allergen 5-like subfamily. In terms of tissue distribution, expressed by the venom gland.

It localises to the secreted. The chain is Venom allergen 5 from Polistes dominula (European paper wasp).